The chain runs to 1356 residues: Tenascin-R (1356 aa).

Positions 1–31 (MGIEGETVVLKNMLIGVNLILLGSMLKPSEC) are cleaved as a signal peptide. Asn55 is a glycosylation site (N-linked (GlcNAc...) asparagine). The stretch at 127–157 (CASSAQVLQELLSRIEMLEREVSVLRDQCNT) forms a coiled coil. O-linked (Xyl...) (chondroitin sulfate) serine glycosylation occurs at Ser176. 2 N-linked (GlcNAc...) asparagine glycosylation sites follow: Asn180 and Asn198. 3 EGF-like domains span residues 188-199 (CICNEGWFGKNC), 204-230 (CPLG…GDDC), and 235-261 (CPTD…GEDC). O-linked (Xyl...) (chondroitin sulfate) serine glycosylation occurs at Ser271. An N-linked (GlcNAc...) asparagine glycan is attached at Asn278. EGF-like domains are found at residues 281-292 (CLCQEGYAGEDC) and 293-324 (SQRR…PDCS). Cystine bridges form between Cys297–Cys307 and Cys314–Cys323. Ser302 carries an O-linked (Xyl...) (chondroitin sulfate) serine glycan. Fibronectin type-III domains follow at residues 328–419 (PPED…TPQG), 420–504 (LQFK…TVID), 505–596 (GPTQ…IDAP), 597–686 (KNLR…TELD), 687–776 (SPRD…FRPI), 777–864 (SHLH…TGID), 865–953 (PPKN…AMDS), 954–1040 (PMDL…TLLD), and 1041–1129 (PPAN…GGRV). Residues Asn391, Asn469, and Asn580 are each glycosylated (N-linked (GlcNAc...) asparagine). A Phosphoserine modification is found at Ser723. N-linked (GlcNAc...) asparagine glycans are attached at residues Asn790, Asn868, Asn873, Asn1034, Asn1044, and Asn1259. One can recognise a Fibrinogen C-terminal domain in the interval 1127 to 1342 (GRVFSHPQDC…FVEMKMRPYI (216 aa)).

This sequence belongs to the tenascin family. As to quaternary structure, forms oligomers. Interacts with TNC and FN1. Interacts with BCAN and ACAN in a calcium -dependent manner. Interacts with CNTN1, SCN2B, PTPRZ1, and CSPG3. Post-translationally, contains N-linked oligosaccharides, O-linked sialylated structures. Contains O-linked chondroitin sulfate glycosaminoglycans. Contains N-linked oligosaccharides with a sulfated carbohydrate structure type GalNAc-4-SO4 or HNK-1 (SO4-3-GlcUABeta1,3GalBeta1,4GlcNAc). The levels of HNK-1 rise and fall in parallel to those of TNR during postnatal development of the cerebellum. In contrast, levels of GalNAc-4-SO4 are regulated independently from those of TNR, rising late in cerebellar development and continuing into adulthood. Early in postnatal development, GalNAc-4-SO4 is found predominantly on isoform 1, whereas in the adult it is predominantly on isoform 2. In terms of tissue distribution, brain-specific. Expressed in oligodendrocytes and small subsets of neurons (mainly interneurons and motoneurons) of the cerebellum, hippocampus and olfactory bulb. Expressed in dorsal root ganglia.

The protein localises to the secreted. Its subcellular location is the extracellular space. The protein resides in the extracellular matrix. In terms of biological role, neural extracellular matrix (ECM) protein involved in interactions with different cells and matrix components. Theses interactions can influence cellular behavior by either evoking a stable adhesion and differentiation, or repulsion and inhibition of neurite growth. Binding to cell surface gangliosides inhibits RGD-dependent integrin-mediated cell adhesion and results in an inhibition of PTK2/FAK1 (FAK) phosphorylation and cell detachment. Binding to membrane surface sulfatides results in a oligodendrocyte adhesion and differentiation. Interaction with CNTN1 induces a repulsion of neurons and an inhibition of neurite outgrowth. Interacts with SCN2B may play a crucial role in clustering and regulation of activity of sodium channels at nodes of Ranvier. TNR-linked chondroitin sulfate glycosaminoglycans are involved in the interaction with FN1 and mediates inhibition of cell adhesion and neurite outgrowth. The highly regulated addition of sulfated carbohydrate structure may modulate the adhesive properties of TNR over the course of development and during synapse maintenance. This chain is Tenascin-R (Tnr), found in Rattus norvegicus (Rat).